The primary structure comprises 133 residues: Large-conductance mechanosensitive channel (133 aa).

The next 2 helical transmembrane spans lie at 10-30 and 76-96; these read FAVK…GAFG and GAFI…FSMV.

This sequence belongs to the MscL family. As to quaternary structure, homopentamer.

The protein resides in the cell inner membrane. Functionally, channel that opens in response to stretch forces in the membrane lipid bilayer. May participate in the regulation of osmotic pressure changes within the cell. This chain is Large-conductance mechanosensitive channel, found in Haemophilus ducreyi (strain 35000HP / ATCC 700724).